We begin with the raw amino-acid sequence, 414 residues long: Enterobactin exporter EntS (414 aa).

At 1–21 the chain is on the cytoplasmic side; the sequence is MNRQSWLLNLSLLKTHPAFRA. The chain crosses the membrane as a helical span at residues 22-42; the sequence is VFLARFISIVSLGLLGVAVPV. The Periplasmic segment spans residues 43–55; that stretch reads QIQMMTHSTWQVG. Residues 56–76 form a helical membrane-spanning segment; sequence LSVTLTGGAMFIGLMVGGVLA. The Cytoplasmic portion of the chain corresponds to 77-83; that stretch reads DRYERKK. Residues 84-104 form a helical membrane-spanning segment; the sequence is VILLARGTCGIGFIGLCVNAL. The Periplasmic portion of the chain corresponds to 105–109; that stretch reads LPEPS. A helical transmembrane segment spans residues 110–130; sequence LLAIYLLGLWDGFFASLGVTA. At 131–156 the chain is on the cytoplasmic side; sequence LLAATPALVGRENLMQAGAITMLTVR. The chain crosses the membrane as a helical span at residues 157–177; sequence LGSVISPMLGGILLASGGVAW. Position 178 (Asn178) is a topological domain, periplasmic. The chain crosses the membrane as a helical span at residues 179 to 199; that stretch reads YGLAAAGTFITLLPLLTLPRL. The Cytoplasmic portion of the chain corresponds to 200-218; it reads PVPPQPRENPFLALLAAFR. A helical membrane pass occupies residues 219-239; that stretch reads FLLACPLIGGIALLGGLVTMA. Residues 240–256 lie on the Periplasmic side of the membrane; that stretch reads SAVRVLYPALAMSWQMS. A helical membrane pass occupies residues 257–277; the sequence is AAQIGLLYAAIPLGAAIGALT. The Cytoplasmic portion of the chain corresponds to 278 to 287; sequence SGQLAHSVRP. Residues 288-307 form a helical membrane-spanning segment; it reads GLIMLVSTVGSFLAVGLFAI. At 308–313 the chain is on the periplasmic side; sequence MPVWIA. A helical transmembrane segment spans residues 314 to 336; the sequence is GVICLALFGWLSAISSLLQYTLL. At 337 to 356 the chain is on the cytoplasmic side; the sequence is QTQTPENMLGRMNGLWTAQN. A helical transmembrane segment spans residues 357–377; the sequence is VTGDAIGAALLGGLGAMMTPV. Position 378 (Ala378) is a topological domain, periplasmic. The chain crosses the membrane as a helical span at residues 379–399; sequence SASVSGFGLVIIGLLLLLVLG. Residues 400 to 414 are Cytoplasmic-facing; the sequence is ELRRFRQTSPVSDAG.

The protein belongs to the major facilitator superfamily. EntS (TC 2.A.1.38) family.

It localises to the cell inner membrane. Functionally, component of an export pathway for enterobactin. The sequence is that of Enterobactin exporter EntS from Salmonella paratyphi A (strain ATCC 9150 / SARB42).